Here is a 291-residue protein sequence, read N- to C-terminus: U3 small nucleolar ribonucleoprotein protein IMP4 (291 aa).

Residues Pro83 to Glu264 enclose the Brix domain.

Part of the small subunit (SSU) processome, composed of more than 70 proteins and the RNA chaperone small nucleolar RNA (snoRNA) U3. Component of a heterotrimeric complex containing IMP3, IMP4 and MPHOSPH10. Interacts with MPHOSPH10.

The protein localises to the nucleus. Its subcellular location is the nucleolus. Component of the 60-80S U3 small nucleolar ribonucleoprotein (U3 snoRNP). Required for the early cleavages during pre-18S ribosomal RNA processing. Part of the small subunit (SSU) processome, first precursor of the small eukaryotic ribosomal subunit. During the assembly of the SSU processome in the nucleolus, many ribosome biogenesis factors, an RNA chaperone and ribosomal proteins associate with the nascent pre-rRNA and work in concert to generate RNA folding, modifications, rearrangements and cleavage as well as targeted degradation of pre-ribosomal RNA by the RNA exosome. This is U3 small nucleolar ribonucleoprotein protein IMP4 from Homo sapiens (Human).